We begin with the raw amino-acid sequence, 590 residues long: Aspartate--tRNA(Asp/Asn) ligase (590 aa).

Glutamate 173 provides a ligand contact to L-aspartate. The tract at residues 197-200 is aspartate; sequence QIFK. Residue arginine 219 coordinates L-aspartate. ATP contacts are provided by residues 219 to 221 and glutamine 228; that span reads RDE. Histidine 450 is a binding site for L-aspartate. Residue glutamate 484 participates in ATP binding. Arginine 491 provides a ligand contact to L-aspartate. 536–539 contributes to the ATP binding site; it reads GLDR.

The protein belongs to the class-II aminoacyl-tRNA synthetase family. Type 1 subfamily. As to quaternary structure, homodimer.

It is found in the cytoplasm. It carries out the reaction tRNA(Asx) + L-aspartate + ATP = L-aspartyl-tRNA(Asx) + AMP + diphosphate. Its function is as follows. Aspartyl-tRNA synthetase with relaxed tRNA specificity since it is able to aspartylate not only its cognate tRNA(Asp) but also tRNA(Asn). Reaction proceeds in two steps: L-aspartate is first activated by ATP to form Asp-AMP and then transferred to the acceptor end of tRNA(Asp/Asn). This chain is Aspartate--tRNA(Asp/Asn) ligase, found in Coxiella burnetii (strain Dugway 5J108-111).